We begin with the raw amino-acid sequence, 206 residues long: uncharacterized protein (206 aa).

It localises to the plastid. It is found in the cyanelle. This is an uncharacterized protein from Cyanophora paradoxa.